The chain runs to 242 residues: uncharacterized protein (242 aa).

The protein belongs to the MtxX family.

This is an uncharacterized protein from Methanothermobacter thermautotrophicus (strain ATCC 29096 / DSM 1053 / JCM 10044 / NBRC 100330 / Delta H) (Methanobacterium thermoautotrophicum).